Here is a 378-residue protein sequence, read N- to C-terminus: Neutral protease 2 homolog ARB_04336 (378 aa).

The N-terminal stretch at M1–A19 is a signal peptide. The propeptide occupies L20–R186. Cystine bridges form between C192–C262 and C269–C287. H311 serves as a coordination point for Zn(2+). E312 is a catalytic residue. Zn(2+)-binding residues include H315 and D326.

It belongs to the peptidase M35 family. The cofactor is Zn(2+).

The protein localises to the secreted. The enzyme catalyses Preferential cleavage of bonds with hydrophobic residues in P1'. Also 3-Asn-|-Gln-4 and 8-Gly-|-Ser-9 bonds in insulin B chain.. Functionally, secreted metalloproteinase that allows assimilation of proteinaceous substrates. Shows high activities on basic nuclear substrates such as histone and protamine. May be involved in virulence. The protein is Neutral protease 2 homolog ARB_04336 of Arthroderma benhamiae (strain ATCC MYA-4681 / CBS 112371) (Trichophyton mentagrophytes).